The chain runs to 276 residues: Putative serine/threonine-protein kinase R436 (276 aa).

Residues 6–266 (YSLDKLIQNR…IKQKLNHFKT (261 aa)) enclose the Protein kinase domain. ATP-binding positions include 12–20 (IQNRKSKRI) and Lys-35. Asp-132 functions as the Proton acceptor in the catalytic mechanism.

Belongs to the protein kinase superfamily. Ser/Thr protein kinase family.

The catalysed reaction is L-seryl-[protein] + ATP = O-phospho-L-seryl-[protein] + ADP + H(+). It catalyses the reaction L-threonyl-[protein] + ATP = O-phospho-L-threonyl-[protein] + ADP + H(+). The polypeptide is Putative serine/threonine-protein kinase R436 (Acanthamoeba polyphaga (Amoeba)).